Here is a 541-residue protein sequence, read N- to C-terminus: Tetratricopeptide repeat protein 8 (541 aa).

A TPR 1 repeat occupies 14–47 (YFRRRKFQLCADLCTQMLEKSPYDQEPDPELPVH). Residues 118-137 (PITGFLRPSTQSGRPGTMEQ) are disordered. TPR repeat units lie at residues 251–284 (WWWK…QEMV), 285–317 (DTFL…FPGE), 318–351 (VTLL…DNTH), 352–385 (VEAI…GIYN), 386–419 (GQLF…AENE), 423–456 (ADVW…NNNH), and 457–490 (AEAY…APHM).

As to quaternary structure, part of BBSome complex, that contains BBS1, BBS2, BBS4, BBS5, BBS7, BBS8/TTC8, BBS9 and BBIP10. Interacts with PCM1. Interacts with CCDC28B. Interacts with PKD1. Widely expressed.

The protein resides in the cytoplasm. It is found in the cytoskeleton. The protein localises to the microtubule organizing center. Its subcellular location is the centrosome. It localises to the cell projection. The protein resides in the cilium membrane. It is found in the centriolar satellite. The protein localises to the cilium. Its function is as follows. The BBSome complex is thought to function as a coat complex required for sorting of specific membrane proteins to the primary cilia. The BBSome complex is required for ciliogenesis but is dispensable for centriolar satellite function. This ciliogenic function is mediated in part by the Rab8 GDP/GTP exchange factor, which localizes to the basal body and contacts the BBSome. Rab8(GTP) enters the primary cilium and promotes extension of the ciliary membrane. Firstly the BBSome associates with the ciliary membrane and binds to RAB3IP/Rabin8, the guanosyl exchange factor (GEF) for Rab8 and then the Rab8-GTP localizes to the cilium and promotes docking and fusion of carrier vesicles to the base of the ciliary membrane. The BBSome complex, together with the LTZL1, controls SMO ciliary trafficking and contributes to the sonic hedgehog (SHH) pathway regulation. Required for proper BBSome complex assembly and its ciliary localization. The sequence is that of Tetratricopeptide repeat protein 8 (TTC8) from Homo sapiens (Human).